The sequence spans 311 residues: Catabolite control protein B (311 aa).

Residues 1-56 (MANIKEIARLANVSVSTVSRVLNHHPYVSEEKRKLVHQVMKELDYTPNRTAIDLIR) enclose the HTH lacI-type domain. The segment at residues 4-23 (IKEIARLANVSVSTVSRVLN) is a DNA-binding region (H-T-H motif).

As to quaternary structure, seems to be complexed to phosphorylated HPr.

Its function is as follows. Transcriptional regulator involved in catabolite repression of several operons. This Bacillus subtilis (strain 168) protein is Catabolite control protein B (ccpB).